A 350-amino-acid polypeptide reads, in one-letter code: Histidinol-phosphate aminotransferase (350 aa).

An N6-(pyridoxal phosphate)lysine modification is found at Lys-209.

Belongs to the class-II pyridoxal-phosphate-dependent aminotransferase family. Histidinol-phosphate aminotransferase subfamily. As to quaternary structure, homodimer. It depends on pyridoxal 5'-phosphate as a cofactor.

It carries out the reaction L-histidinol phosphate + 2-oxoglutarate = 3-(imidazol-4-yl)-2-oxopropyl phosphate + L-glutamate. It functions in the pathway amino-acid biosynthesis; L-histidine biosynthesis; L-histidine from 5-phospho-alpha-D-ribose 1-diphosphate: step 7/9. The chain is Histidinol-phosphate aminotransferase from Geobacter sp. (strain M21).